The following is a 206-amino-acid chain: uncharacterized protein (206 aa).

This is an uncharacterized protein from Mycoplasma pneumoniae (strain ATCC 29342 / M129 / Subtype 1) (Mycoplasmoides pneumoniae).